A 239-amino-acid polypeptide reads, in one-letter code: Splicing factor U2AF 35 kDa subunit (239 aa).

A2 bears the N-acetylalanine mark. The C3H1-type 1 zinc-finger motif lies at 12-40 (EKDKVNCSFYFKIGACRHGDRCSRLHNKP). An N6-methyllysine modification is found at K39. Residues S61 and S145 each carry the phosphoserine modification. The region spanning 65–147 (LRCAVSDVEM…QPIHAELSPV (83 aa)) is the RRM domain. A C3H1-type 2 zinc finger spans residues 149–176 (DFREACCRQYEMGECTRGGFCNFMHLKP). The residue at position 165 (R165) is an Omega-N-methylarginine. The interval 183-239 (RELYGRRRKKHRSRSRSRERRSRSRDRGRGGGGGGGGGGGRERDRRRSRDRERSGRF) is disordered. Basic residues predominate over residues 188 to 208 (RRRKKHRSRSRSRERRSRSRD). Positions 212–221 (GGGGGGGGGG) are enriched in gly residues. Residues 222 to 239 (GRERDRRRSRDRERSGRF) are compositionally biased toward basic and acidic residues.

It belongs to the splicing factor SR family. In terms of assembly, identified in the spliceosome C complex. Heterodimer with U2AF2. Interacts (via RS domain) with PHF5A (via N-terminus). Interacts with ZRANB2. Interacts with SDE2. Interacts with SF3B1. As to expression, expressed in primary spermatocytes and elongating spermatids (at protein level).

It is found in the nucleus. It localises to the nucleus speckle. In terms of biological role, plays a critical role in both constitutive and enhancer-dependent splicing by mediating protein-protein interactions and protein-RNA interactions required for accurate 3'-splice site selection. Recruits U2 snRNP to the branch point. Directly mediates interactions between U2AF2 and proteins bound to the enhancers and thus may function as a bridge between U2AF2 and the enhancer complex to recruit it to the adjacent intron. This chain is Splicing factor U2AF 35 kDa subunit (U2af1), found in Mus musculus (Mouse).